The chain runs to 141 residues: Small ribosomal subunit protein bS6 (141 aa).

The interval 97 to 141 is disordered; it reads TGQSEMLKAEENRSERRERRDRPEHSDSADGDDGDNSDVSDNADE. The segment covering 103 to 124 has biased composition (basic and acidic residues); the sequence is LKAEENRSERRERRDRPEHSDS. The span at 125–141 shows a compositional bias: acidic residues; that stretch reads ADGDDGDNSDVSDNADE.

It belongs to the bacterial ribosomal protein bS6 family.

Its function is as follows. Binds together with bS18 to 16S ribosomal RNA. This is Small ribosomal subunit protein bS6 from Pseudomonas syringae pv. syringae (strain B728a).